Here is a 222-residue protein sequence, read N- to C-terminus: Glutathione S-transferase A5 (222 aa).

Ala-2 is modified (N-acetylalanine). The GST N-terminal domain maps to 3–83 (EKPKLHYSNA…YIASKYNLYG (81 aa)). Residue Lys-4 is modified to N6-succinyllysine. Glutathione is bound by residues Tyr-9, Arg-45, 54-55 (QV), and 67-68 (QT). The GST C-terminal domain maps to 85–208 (DMKERALIDM…QPGSQRKPPM (124 aa)).

Belongs to the GST superfamily. Alpha family. In terms of assembly, homodimer. Expression not detected.

It localises to the cytoplasm. It carries out the reaction RX + glutathione = an S-substituted glutathione + a halide anion + H(+). The sequence is that of Glutathione S-transferase A5 (GSTA5) from Homo sapiens (Human).